A 340-amino-acid polypeptide reads, in one-letter code: Phosphoribosylformylglycinamidine cyclo-ligase (340 aa).

Belongs to the AIR synthase family.

It localises to the cytoplasm. The enzyme catalyses 2-formamido-N(1)-(5-O-phospho-beta-D-ribosyl)acetamidine + ATP = 5-amino-1-(5-phospho-beta-D-ribosyl)imidazole + ADP + phosphate + H(+). Its pathway is purine metabolism; IMP biosynthesis via de novo pathway; 5-amino-1-(5-phospho-D-ribosyl)imidazole from N(2)-formyl-N(1)-(5-phospho-D-ribosyl)glycinamide: step 2/2. The sequence is that of Phosphoribosylformylglycinamidine cyclo-ligase from Streptococcus pyogenes serotype M1.